A 377-amino-acid polypeptide reads, in one-letter code: Phosphatidylglycerol--prolipoprotein diacylglyceryl transferase (377 aa).

4 consecutive transmembrane segments (helical) span residues 18–38 (PVPL…AVVV), 48–68 (MDPA…IVGA), 93–113 (IWNG…GAWL), and 119–139 (GISL…AQAI). Residue R141 coordinates a 1,2-diacyl-sn-glycero-3-phospho-(1'-sn-glycerol). The next 3 helical transmembrane spans lie at 177–197 (QPTF…LLLV), 208–228 (LFAL…MLRI), and 238–258 (RVNI…LLVV). Positions 265-377 (DVSPQEQRAL…RTRVERPPAT (113 aa)) are disordered. Composition is skewed to low complexity over residues 288–297 (AAGETAGETR) and 308–344 (GVDV…DADG).

The protein belongs to the Lgt family.

The protein resides in the cell membrane. The catalysed reaction is L-cysteinyl-[prolipoprotein] + a 1,2-diacyl-sn-glycero-3-phospho-(1'-sn-glycerol) = an S-1,2-diacyl-sn-glyceryl-L-cysteinyl-[prolipoprotein] + sn-glycerol 1-phosphate + H(+). It participates in protein modification; lipoprotein biosynthesis (diacylglyceryl transfer). Its function is as follows. Catalyzes the transfer of the diacylglyceryl group from phosphatidylglycerol to the sulfhydryl group of the N-terminal cysteine of a prolipoprotein, the first step in the formation of mature lipoproteins. In Frankia alni (strain DSM 45986 / CECT 9034 / ACN14a), this protein is Phosphatidylglycerol--prolipoprotein diacylglyceryl transferase.